The sequence spans 201 residues: Putative 3-methyladenine DNA glycosylase (201 aa).

It belongs to the DNA glycosylase MPG family.

This chain is Putative 3-methyladenine DNA glycosylase, found in Clostridium novyi (strain NT).